Reading from the N-terminus, the 259-residue chain is Acyl-[acyl-carrier-protein]--UDP-N-acetylglucosamine O-acyltransferase (259 aa).

It belongs to the transferase hexapeptide repeat family. LpxA subfamily. As to quaternary structure, homotrimer.

The protein resides in the cytoplasm. It catalyses the reaction a (3R)-hydroxyacyl-[ACP] + UDP-N-acetyl-alpha-D-glucosamine = a UDP-3-O-[(3R)-3-hydroxyacyl]-N-acetyl-alpha-D-glucosamine + holo-[ACP]. Its pathway is glycolipid biosynthesis; lipid IV(A) biosynthesis; lipid IV(A) from (3R)-3-hydroxytetradecanoyl-[acyl-carrier-protein] and UDP-N-acetyl-alpha-D-glucosamine: step 1/6. Its function is as follows. Involved in the biosynthesis of lipid A, a phosphorylated glycolipid that anchors the lipopolysaccharide to the outer membrane of the cell. The polypeptide is Acyl-[acyl-carrier-protein]--UDP-N-acetylglucosamine O-acyltransferase (Nautilia profundicola (strain ATCC BAA-1463 / DSM 18972 / AmH)).